We begin with the raw amino-acid sequence, 324 residues long: MSASSQSRPTTIACLLGPTASGKTAAALALAARRPIEIVSVDSALVYRDMDIGTAKPSRDERASVPHHLIDIIDPADAYSAAEFRADTLRLIGEIVARGRTPLLAGGTMLYYKALTQGLNDLPGADPEVRAALDADAARDGWPALHARLAQVDPDTAARLAPNDSQRIQRALEIFMLSGQPMSALLAAPRRTDDAAAAYRFVPVALEPSDRAVLHARIAQRFDAMLDAGFIDEVERLRRRDDLHPDLPSMRCVGYRQAWEFLDGDTDYRTMRDKGIFATRQLCKRQITWLRAMPERIVVDCIAPDSTARALDALERVLDGRTPD.

17–24 is a binding site for ATP; that stretch reads GPTASGKT. Substrate is bound at residue 19–24; that stretch reads TASGKT. Interaction with substrate tRNA stretches follow at residues 42–45, 166–170, 251–256, and 284–291; these read DSAL, QRIQR, RCVGYR, and KRQITWLR.

It belongs to the IPP transferase family. In terms of assembly, monomer. Mg(2+) serves as cofactor.

It catalyses the reaction adenosine(37) in tRNA + dimethylallyl diphosphate = N(6)-dimethylallyladenosine(37) in tRNA + diphosphate. Catalyzes the transfer of a dimethylallyl group onto the adenine at position 37 in tRNAs that read codons beginning with uridine, leading to the formation of N6-(dimethylallyl)adenosine (i(6)A). This Burkholderia orbicola (strain MC0-3) protein is tRNA dimethylallyltransferase.